The primary structure comprises 161 residues: DNA-directed RNA polymerase 19 kDa subunit (161 aa).

Residues 1–32 (MADTDDIIDYESDDLTEYEDDEEDGESLETSD) show a composition bias toward acidic residues. Residues 1–35 (MADTDDIIDYESDDLTEYEDDEEDGESLETSDIDP) are disordered.

Belongs to the poxviridae DNA-directed RNA polymerase 19 kDa subunit family. The DNA-dependent RNA polymerase used for intermediate and late genes expression consists of eight subunits Rpo30/OPG66, Rpo7/OPG90, Rpo22/OPG103, Rpo147/OPG105, Rpo18/OPG119, Rpo19/OPG131, Rpo132/OPG151 and Rpo35/OPG156. The same holoenzyme, with the addition of the transcription-specificity factor OPG109, is used for early gene expression.

It localises to the virion. It catalyses the reaction RNA(n) + a ribonucleoside 5'-triphosphate = RNA(n+1) + diphosphate. Part of the DNA-dependent RNA polymerase which catalyzes the transcription of viral DNA into RNA using the four ribonucleoside triphosphates as substrates. Responsible for the transcription of early, intermediate and late genes. DNA-dependent RNA polymerase associates with the early transcription factor (ETF), itself composed of OPG118 and OPG133, thereby allowing the early genes transcription. Late transcription, and probably also intermediate transcription, require newly synthesized RNA polymerase. This is DNA-directed RNA polymerase 19 kDa subunit (OPG131) from Monkeypox virus.